A 212-amino-acid polypeptide reads, in one-letter code: ATP phosphoribosyltransferase (212 aa).

Belongs to the ATP phosphoribosyltransferase family. Short subfamily. In terms of assembly, heteromultimer composed of HisG and HisZ subunits.

The protein localises to the cytoplasm. The catalysed reaction is 1-(5-phospho-beta-D-ribosyl)-ATP + diphosphate = 5-phospho-alpha-D-ribose 1-diphosphate + ATP. It participates in amino-acid biosynthesis; L-histidine biosynthesis; L-histidine from 5-phospho-alpha-D-ribose 1-diphosphate: step 1/9. Its function is as follows. Catalyzes the condensation of ATP and 5-phosphoribose 1-diphosphate to form N'-(5'-phosphoribosyl)-ATP (PR-ATP). Has a crucial role in the pathway because the rate of histidine biosynthesis seems to be controlled primarily by regulation of HisG enzymatic activity. The protein is ATP phosphoribosyltransferase of Clostridium botulinum (strain Langeland / NCTC 10281 / Type F).